Consider the following 559-residue polypeptide: D-2-hydroxyglutarate dehydrogenase, mitochondrial (559 aa).

The N-terminal 78 residues, 1–78 (MMMQKLRRSG…GMLLQQYKCF (78 aa)), are a transit peptide targeting the mitochondrion. The FAD-binding PCMH-type domain occupies 130–309 (YKGSSKLMLL…TKVSILTQPK (180 aa)).

Belongs to the FAD-binding oxidoreductase/transferase type 4 family. In terms of assembly, homodimer. FAD is required as a cofactor.

The protein localises to the mitochondrion. It catalyses the reaction (R)-2-hydroxyglutarate + A = 2-oxoglutarate + AH2. In terms of biological role, catalyzes the oxidation of (R)-2-hydroxyglutarate to 2-oxoglutarate. May be involved in the catabolism of propionyl-CoA derived from beta-oxidation. Involved in degradation of lysine for the supply of carbon and electrons to the ETF/ETFQO complex during dark-induced sugar starvation. This Arabidopsis thaliana (Mouse-ear cress) protein is D-2-hydroxyglutarate dehydrogenase, mitochondrial (D2HGDH).